A 108-amino-acid polypeptide reads, in one-letter code: DNA-binding protein HBbu (108 aa).

The protein belongs to the bacterial histone-like protein family.

In terms of biological role, histone-like DNA-binding protein which is capable of wrapping DNA to stabilize it, and thus to prevent its denaturation under extreme environmental conditions. This chain is DNA-binding protein HBbu (hbb), found in Borrelia parkeri.